The sequence spans 230 residues: Claudin-2 (230 aa).

Residues 1-7 (MASLGLQ) lie on the Cytoplasmic side of the membrane. Residues 8 to 28 (LVGYILGLLGLLGTLVAMLLP) form a helical membrane-spanning segment. Residues 29–81 (SWKTSSYVGASIVTAVGFSKGLWMECATHSTGITQCDIYSTLLGLPADIQAAQ) are Extracellular-facing. Cys54 and Cys64 are joined by a disulfide. The chain crosses the membrane as a helical span at residues 82 to 102 (AMMVTSSAISSLACIISVVGM). The Cytoplasmic segment spans residues 103–116 (RCTVFCQESRAKDR). The helical transmembrane segment at 117–137 (VAVAGGVFFILGGLLGFIPVA) threads the bilayer. At 138 to 162 (WNLHGILRDFYSPLVPDSMKFEIGE) the chain is on the extracellular side. The helical transmembrane segment at 163–183 (ALYLGIISSLFSLIAGIILCF) threads the bilayer. The Cytoplasmic portion of the chain corresponds to 184 to 230 (SCSSQRNRSNYYDAYQAQPLATRSSPRPGQPPKVKSEFNSYSLTGYV). The tract at residues 205–230 (TRSSPRPGQPPKVKSEFNSYSLTGYV) is disordered. Lys218 is covalently cross-linked (Glycyl lysine isopeptide (Lys-Gly) (interchain with G-Cter in SUMO)). Phosphoserine occurs at positions 219 and 223. Positions 220–230 (EFNSYSLTGYV) are enriched in polar residues. The segment at 229-230 (YV) is interactions with TJP1, TJP2 and TJP3.

It belongs to the claudin family. In terms of assembly, can form homo- and heteropolymers with other claudins to mediate paracellular barrier and channel functions of tight junctions in response to physiological stimuli. Homopolymers interact with CLDN3, but not CLDN1, homopolymers. Directly interacts with TJP1/ZO-1, TJP2/ZO-2 and TJP3/ZO-3. The disulfide bond is necessary for pore formation, but is not required for correct protein trafficking.

It localises to the cell junction. The protein localises to the tight junction. It is found in the cell membrane. It catalyses the reaction Na(+)(in) = Na(+)(out). The enzyme catalyses K(+)(in) = K(+)(out). The catalysed reaction is Rb(+)(in) = Rb(+)(out). It carries out the reaction Li(+)(in) = Li(+)(out). It catalyses the reaction Cs(+)(in) = Cs(+)(out). The enzyme catalyses Ca(2+)(in) = Ca(2+)(out). The catalysed reaction is methylamine(out) = methylamine(in). It carries out the reaction choline(out) = choline(in). It catalyses the reaction H2O(in) = H2O(out). Its function is as follows. Forms paracellular channels: polymerizes in tight junction strands with cation- and water-selective channels through the strands, conveying epithelial permeability in a process known as paracellular tight junction permeability. In intestinal epithelium, allows for sodium and water fluxes from the peritoneal side to the lumen of the intestine to regulate nutrient absorption and clear enteric pathogens as part of mucosal immune response. In kidney, allows passive sodium and calcium reabsorption across proximal tubules from the lumen back to the bloodstream. In the hepatobiliary tract, allows paracellular water and cation fluxes in the hepatic perivenous areas and biliary epithelium to generate bile flow and maintain osmotic gradients. The protein is Claudin-2 of Homo sapiens (Human).